Reading from the N-terminus, the 260-residue chain is DNA repair protein RecO (260 aa).

This sequence belongs to the RecO family.

Functionally, involved in DNA repair and RecF pathway recombination. This is DNA repair protein RecO from Levilactobacillus brevis (strain ATCC 367 / BCRC 12310 / CIP 105137 / JCM 1170 / LMG 11437 / NCIMB 947 / NCTC 947) (Lactobacillus brevis).